The primary structure comprises 288 residues: Pyridoxal kinase PdxY (288 aa).

Substrate-binding positions include Ser12 and Thr47–Gln48. ATP is bound by residues Asp114, Glu151, Lys184, and Arg211–Leu214. Asp225 is a substrate binding site.

It belongs to the pyridoxine kinase family. PdxY subfamily. Homodimer. The cofactor is Mg(2+).

It catalyses the reaction pyridoxal + ATP = pyridoxal 5'-phosphate + ADP + H(+). The protein operates within cofactor metabolism; pyridoxal 5'-phosphate salvage; pyridoxal 5'-phosphate from pyridoxal: step 1/1. Functionally, pyridoxal kinase involved in the salvage pathway of pyridoxal 5'-phosphate (PLP). Catalyzes the phosphorylation of pyridoxal to PLP. The sequence is that of Pyridoxal kinase PdxY from Pseudomonas aeruginosa (strain UCBPP-PA14).